The following is a 248-amino-acid chain: Protein FAM133A (248 aa).

The span at Asn68–Leu80 shows a compositional bias: basic and acidic residues. The interval Asn68 to Arg248 is disordered. The span at Lys90–Cys102 shows a compositional bias: basic residues. A compositionally biased stretch (low complexity) spans Arg103–Ser118. Basic residues predominate over residues Gln127–Ser138. Composition is skewed to basic and acidic residues over residues His147–Ser156, Ser163–Ser175, and Arg211–Glu220. Residues Lys221–Arg248 show a composition bias toward basic residues.

The protein belongs to the FAM133 family.

This is Protein FAM133A (FAM133A) from Homo sapiens (Human).